The primary structure comprises 253 residues: Probable transcriptional regulatory protein Tlet_1011 (253 aa).

The protein belongs to the TACO1 family.

The protein localises to the cytoplasm. This is Probable transcriptional regulatory protein Tlet_1011 from Pseudothermotoga lettingae (strain ATCC BAA-301 / DSM 14385 / NBRC 107922 / TMO) (Thermotoga lettingae).